The sequence spans 197 residues: Imidazoleglycerol-phosphate dehydratase (197 aa).

It belongs to the imidazoleglycerol-phosphate dehydratase family.

The protein resides in the cytoplasm. It catalyses the reaction D-erythro-1-(imidazol-4-yl)glycerol 3-phosphate = 3-(imidazol-4-yl)-2-oxopropyl phosphate + H2O. It functions in the pathway amino-acid biosynthesis; L-histidine biosynthesis; L-histidine from 5-phospho-alpha-D-ribose 1-diphosphate: step 6/9. The sequence is that of Imidazoleglycerol-phosphate dehydratase from Thermobifida fusca (strain YX).